Consider the following 421-residue polypeptide: Queuine tRNA-ribosyltransferase accessory subunit 2 (421 aa).

Positions 328, 330, 333, and 359 each coordinate Zn(2+).

It belongs to the queuine tRNA-ribosyltransferase family. QTRT2 subfamily. In terms of assembly, heterodimer of a catalytic subunit and an accessory subunit. Zn(2+) serves as cofactor.

It is found in the cytoplasm. In terms of biological role, non-catalytic subunit of the queuine tRNA-ribosyltransferase (TGT) that catalyzes the base-exchange of a guanine (G) residue with queuine (Q) at position 34 (anticodon wobble position) in tRNAs with GU(N) anticodons (tRNA-Asp, -Asn, -His and -Tyr), resulting in the hypermodified nucleoside queuosine (7-(((4,5-cis-dihydroxy-2-cyclopenten-1-yl)amino)methyl)-7-deazaguanosine). The protein is Queuine tRNA-ribosyltransferase accessory subunit 2 of Aedes aegypti (Yellowfever mosquito).